Consider the following 131-residue polypeptide: MGRVRTKTVKRAARQIVEKYYGKLGLDFQYNKKVAEEVALIPSKRMRNKVAGFITHLMRRIQKGPVRGISLKLQEEERERRMDYIPEKSELEVPVIQVDQDTADMLNFLKISLPNLKVMSFNAHEHREDTK.

The protein belongs to the eukaryotic ribosomal protein eS17 family.

The sequence is that of Small ribosomal subunit protein eS17 (RPS17) from Theileria annulata.